A 719-amino-acid chain; its full sequence is Solute carrier family 15 member 2 (719 aa).

Topologically, residues 1–43 (MGKMKDKDVDAEKYEKAQRSPKLCGTNYPVSIAFIVVNEFCER) are cytoplasmic. The chain crosses the membrane as a helical span at residues 44–61 (FSYYGMKAVLTLYFMNYL). At 62-69 (HWDKNLST) the chain is on the extracellular side. N66 is a glycosylation site (N-linked (GlcNAc...) asparagine). The helical transmembrane segment at 70-90 (AIYHAFSGLCYFTPLLGALIA) threads the bilayer. The Cytoplasmic segment spans residues 91–99 (DSWLGKFKT). The helical transmembrane segment at 100 to 120 (IIYLSIVYVIGHVVKSVGAIP) threads the bilayer. Residues 121 to 125 (DVGDS) are Extracellular-facing. A helical transmembrane segment spans residues 126 to 146 (TVHIALSMVGLGLIALGTGGI). Over 147–169 (KPCVAAFGGDQFDEDNIDERRKF) the chain is Cytoplasmic. Residues 170–190 (FSIFYMSINAGSVLSTIITPI) traverse the membrane as a helical segment. The Extracellular portion of the chain corresponds to 191-201 (LRGDVQCFGGD). Residues 202-222 (CYALAFGVPAALMVIALVVFI) traverse the membrane as a helical segment. The Cytoplasmic portion of the chain corresponds to 223 to 280 (SGSGLYKKSPPEGNVLVRVCKCIGFAISNRWTNSKKSPKRSHWLDWAEEKYSKRLIQE). A helical transmembrane segment spans residues 281 to 301 (IKMVCRVLVLYIPLPMFWALF). Residues 302–334 (DQQGSRWTLQATRMNMDFGGGFIIKPDQMQMLN) are Extracellular-facing. The chain crosses the membrane as a helical span at residues 335–355 (ALLILVFIPIFDMGIYPLVGL). The Cytoplasmic portion of the chain corresponds to 356-367 (CRIKLTPLKKMA). A helical membrane pass occupies residues 368 to 388 (TGMILAALAFCAATAVEVYVI). Residues 389 to 594 (KTVVEPPPAK…QANNIHIGWQ (206 aa)) lie on the Extracellular side of the membrane. Residues 389-594 (KTVVEPPPAK…QANNIHIGWQ (206 aa)) form an extracellular domain (ECD) region. N481, N513, and N532 each carry an N-linked (GlcNAc...) asparagine glycan. The helical transmembrane segment at 595 to 615 (IPQYVFLTAGEVMFSITGLEF) threads the bilayer. The Cytoplasmic portion of the chain corresponds to 616–626 (SYSQAPASMKS). The helical transmembrane segment at 627 to 647 (VLQAGWLMTVAFGNVIVLIVA) threads the bilayer. At 648–657 (EGAGMEQWVE) the chain is on the extracellular side. The helical transmembrane segment at 658–678 (FLLFAALLVAVSIIFSIMAYF) threads the bilayer. Residues 679 to 719 (YTYVDPDQLDKLFKEDGDGGKVESSKKDELSLGDMPKQTKM) lie on the Cytoplasmic side of the membrane. The span at 695 to 708 (GDGGKVESSKKDEL) shows a compositional bias: basic and acidic residues. The segment at 695–719 (GDGGKVESSKKDELSLGDMPKQTKM) is disordered.

This sequence belongs to the major facilitator superfamily. Proton-dependent oligopeptide transporter (POT/PTR) (TC 2.A.17) family. Expressed in kidney, brain and gut. Also expressed weakly in eye, gill and skeletal muscle.

It localises to the apical cell membrane. The protein localises to the cytoplasmic vesicle. It is found in the phagosome membrane. Its subcellular location is the cell membrane. It catalyses the reaction a dipeptide(out) + 2 H(+)(out) = a dipeptide(in) + 2 H(+)(in). The enzyme catalyses N-acetyl-D-muramoyl-L-alanyl-D-isoglutamine(out) + 3 H(+)(out) = N-acetyl-D-muramoyl-L-alanyl-D-isoglutamine(in) + 3 H(+)(in). It carries out the reaction glycyl-L-leucine(out) + 2 H(+)(out) = glycyl-L-leucine(in) + 2 H(+)(in). The catalysed reaction is glycyl-L-lysine(out) + 2 H(+)(out) = glycyl-L-lysine(in) + 2 H(+)(in). It catalyses the reaction glycyl-L-glutamate(out) + 3 H(+)(out) = glycyl-L-glutamate(in) + 3 H(+)(in). The enzyme catalyses L-alanyl-L-alanine(out) + 2 H(+)(out) = L-alanyl-L-alanine(in) + 2 H(+)(in). It carries out the reaction an L-amino acid tripeptide(out) + 2 H(+)(out) = an L-amino acid tripeptide(in) + 2 H(+)(in). The catalysed reaction is carnosine(out) + 2 H(+)(out) = carnosine(in) + 2 H(+)(in). Its function is as follows. Proton-coupled amino-acid transporter that transports oligopeptides of 2 to 4 amino acids with a preference for dipeptides. Transports neutral and anionic dipeptides with a proton to peptide stoichiometry of 2:1 or 3:1. The chain is Solute carrier family 15 member 2 from Danio rerio (Zebrafish).